A 209-amino-acid polypeptide reads, in one-letter code: MTQKKRSPSSTRWLKEHFDDQYVKKAQKLGLRSRAVFKIDEIQGKDKLLRTGMTVVDLGAAPGGWSQFAVEQVGDNGRVIACDILPMDPIAGVDFLQGDFREETVLGALLDRVGPDKVDVVMSDMAPNMSGTQQVDQARAMYLIELALDMCNQVLRTNGSFVVKVFQGEGFDAYLNEIRKLFSAVKIRKPDSSRARSREVYIVATGFKL.

Residues G63, W65, D83, D99, and D124 each contribute to the S-adenosyl-L-methionine site. K164 acts as the Proton acceptor in catalysis.

Belongs to the class I-like SAM-binding methyltransferase superfamily. RNA methyltransferase RlmE family.

It is found in the cytoplasm. It catalyses the reaction uridine(2552) in 23S rRNA + S-adenosyl-L-methionine = 2'-O-methyluridine(2552) in 23S rRNA + S-adenosyl-L-homocysteine + H(+). Functionally, specifically methylates the uridine in position 2552 of 23S rRNA at the 2'-O position of the ribose in the fully assembled 50S ribosomal subunit. The sequence is that of Ribosomal RNA large subunit methyltransferase E from Aeromonas salmonicida (strain A449).